Here is a 318-residue protein sequence, read N- to C-terminus: Transcription factor MYBS3 (318 aa).

Disordered regions lie at residues 1–20 (MTRR…TCPN) and 50–98 (AAGS…PWTE). The CCHC-type zinc finger occupies 3–20 (RRCSHCSHNGHNSRTCPN). A compositionally biased stretch (polar residues) spans 8–18 (CSHNGHNSRTC). Residues 50-77 (AAGSTSGGASPADGPDAAPTAADGYASD) are compositionally biased toward low complexity. Residues 88-144 (RDRKKGVPWTEEEHRRFLLGLQKLGKGDWRGISRNFVVSRTPTQVASHAQKYFIRQS) enclose the HTH myb-type domain. A DNA-binding region (H-T-H motif) is located at residues 116 to 140 (WRGISRNFVVSRTPTQVASHAQKYF). Residues 159 to 200 (VPDESMDLPPLPGGQEPETQVLNQPALPPPREEEEVDSMESD) are disordered.

As to expression, expressed in all tissues, with the highest level in senescent leaves.

The protein resides in the nucleus. Functionally, transcription repressor that binds to 5'-TATCCA-3' elements in gene promoters. Contributes to the sugar-repressed transcription of promoters containing SRS or 5'-TATCCA-3' elements. Transcription repressor involved in a cold stress response pathway that confers cold tolerance. Suppresses the DREB1-dependent signaling pathway under prolonged cold stress. DREB1 responds quickly and transiently while MYBS3 responds slowly to cold stress. They may act sequentially and complementarily for adaptation to short- and long-term cold stress. The sequence is that of Transcription factor MYBS3 from Oryza sativa subsp. japonica (Rice).